An 80-amino-acid chain; its full sequence is MIIPWQDIAPDTLENLISEFVLREGTDYGEVEISHQEKVDQIKVLLKNGEAMVVFSELHETVDIQTKARFNPNLTNHNYD.

The protein belongs to the UPF0270 family.

This Aliivibrio fischeri (strain MJ11) (Vibrio fischeri) protein is UPF0270 protein VFMJ11_0205.